The sequence spans 80 residues: Putative membrane protein insertion efficiency factor (80 aa).

The protein belongs to the UPF0161 family.

The protein localises to the cell membrane. Its function is as follows. Could be involved in insertion of integral membrane proteins into the membrane. This Shouchella clausii (strain KSM-K16) (Alkalihalobacillus clausii) protein is Putative membrane protein insertion efficiency factor.